A 284-amino-acid polypeptide reads, in one-letter code: Tropomyosin (284 aa).

A coiled-coil region spans residues 1–284; sequence MDAIKKKMQA…DMTFTELIGN (284 aa).

The protein belongs to the tropomyosin family. In terms of assembly, homodimer.

In terms of biological role, tropomyosin, in association with the troponin complex, plays a central role in the calcium dependent regulation of muscle contraction. This Periplaneta fuliginosa (Smokybrown cockroach) protein is Tropomyosin.